A 304-amino-acid polypeptide reads, in one-letter code: Porphobilinogen deaminase (304 aa).

Cysteine 239 is subject to S-(dipyrrolylmethanemethyl)cysteine.

The protein belongs to the HMBS family. As to quaternary structure, monomer. Dipyrromethane serves as cofactor.

It catalyses the reaction 4 porphobilinogen + H2O = hydroxymethylbilane + 4 NH4(+). It participates in porphyrin-containing compound metabolism; protoporphyrin-IX biosynthesis; coproporphyrinogen-III from 5-aminolevulinate: step 2/4. Its function is as follows. Tetrapolymerization of the monopyrrole PBG into the hydroxymethylbilane pre-uroporphyrinogen in several discrete steps. This Brucella ovis (strain ATCC 25840 / 63/290 / NCTC 10512) protein is Porphobilinogen deaminase.